A 229-amino-acid chain; its full sequence is Enolase-phosphatase E1 (229 aa).

Residues 207-229 (RDPASHHPQVQRFDDIHPEQIPA) are disordered. Basic and acidic residues predominate over residues 218–229 (RFDDIHPEQIPA).

This sequence belongs to the HAD-like hydrolase superfamily. MasA/MtnC family. Monomer. Requires Mg(2+) as cofactor.

It carries out the reaction 5-methylsulfanyl-2,3-dioxopentyl phosphate + H2O = 1,2-dihydroxy-5-(methylsulfanyl)pent-1-en-3-one + phosphate. It functions in the pathway amino-acid biosynthesis; L-methionine biosynthesis via salvage pathway; L-methionine from S-methyl-5-thio-alpha-D-ribose 1-phosphate: step 3/6. The protein operates within amino-acid biosynthesis; L-methionine biosynthesis via salvage pathway; L-methionine from S-methyl-5-thio-alpha-D-ribose 1-phosphate: step 4/6. Its function is as follows. Bifunctional enzyme that catalyzes the enolization of 2,3-diketo-5-methylthiopentyl-1-phosphate (DK-MTP-1-P) into the intermediate 2-hydroxy-3-keto-5-methylthiopentenyl-1-phosphate (HK-MTPenyl-1-P), which is then dephosphorylated to form the acireductone 1,2-dihydroxy-3-keto-5-methylthiopentene (DHK-MTPene). The chain is Enolase-phosphatase E1 from Klebsiella pneumoniae subsp. pneumoniae (strain ATCC 700721 / MGH 78578).